The chain runs to 166 residues: Interferon gamma (166 aa).

Residues 1 to 23 form the signal peptide; that stretch reads MKYTSSFLALLLSVLLGFSGSYG. A Pyrrolidone carboxylic acid modification is found at Q24. N39 and N106 each carry an N-linked (GlcNAc...) asparagine glycan.

It belongs to the type II (or gamma) interferon family. In terms of assembly, homodimer. Interacts with IFNGR1 (via extracellular domain); this interaction promotes IFNGR1 dimerization. In terms of tissue distribution, released primarily from activated T lymphocytes.

It localises to the secreted. In terms of biological role, type II interferon produced by immune cells such as T-cells and NK cells that plays crucial roles in antimicrobial, antiviral, and antitumor responses by activating effector immune cells and enhancing antigen presentation. Primarily signals through the JAK-STAT pathway after interaction with its receptor IFNGR1 to affect gene regulation. Upon IFNG binding, IFNGR1 intracellular domain opens out to allow association of downstream signaling components JAK2, JAK1 and STAT1, leading to STAT1 activation, nuclear translocation and transcription of IFNG-regulated genes. Many of the induced genes are transcription factors such as IRF1 that are able to further drive regulation of a next wave of transcription. Plays a role in class I antigen presentation pathway by inducing a replacement of catalytic proteasome subunits with immunoproteasome subunits. In turn, increases the quantity, quality, and repertoire of peptides for class I MHC loading. Increases the efficiency of peptide generation also by inducing the expression of activator PA28 that associates with the proteasome and alters its proteolytic cleavage preference. Up-regulates as well MHC II complexes on the cell surface by promoting expression of several key molecules such as cathepsins B/CTSB, H/CTSH, and L/CTSL. Participates in the regulation of hematopoietic stem cells during development and under homeostatic conditions by affecting their development, quiescence, and differentiation. In Capra hircus (Goat), this protein is Interferon gamma (IFNG).